The following is a 329-amino-acid chain: GTP 3',8-cyclase (329 aa).

The Radical SAM core domain maps to 8-234; that stretch reads VFARKFYYLR…QLRQRSDGPA (227 aa). R17 provides a ligand contact to GTP. [4Fe-4S] cluster is bound by residues C24 and C28. Y30 contributes to the S-adenosyl-L-methionine binding site. C31 contacts [4Fe-4S] cluster. R68 is a GTP binding site. S-adenosyl-L-methionine is bound at residue G72. Residue T99 participates in GTP binding. Position 123 (S123) interacts with S-adenosyl-L-methionine. Residue K160 participates in GTP binding. M194 lines the S-adenosyl-L-methionine pocket. Positions 257 and 260 each coordinate [4Fe-4S] cluster. Residue 262–264 coordinates GTP; the sequence is RLR. C274 lines the [4Fe-4S] cluster pocket.

It belongs to the radical SAM superfamily. MoaA family. Monomer and homodimer. The cofactor is [4Fe-4S] cluster.

The catalysed reaction is GTP + AH2 + S-adenosyl-L-methionine = (8S)-3',8-cyclo-7,8-dihydroguanosine 5'-triphosphate + 5'-deoxyadenosine + L-methionine + A + H(+). It participates in cofactor biosynthesis; molybdopterin biosynthesis. Catalyzes the cyclization of GTP to (8S)-3',8-cyclo-7,8-dihydroguanosine 5'-triphosphate. The chain is GTP 3',8-cyclase from Shigella flexneri.